We begin with the raw amino-acid sequence, 1025 residues long: Presequence protease, mitochondrial (1025 aa).

Histidine 90 is a binding site for Zn(2+). Glutamate 93 (proton acceptor) is an active-site residue. Histidine 94 serves as a coordination point for Zn(2+). Residue glutamate 166 is part of the active site. A Zn(2+)-binding site is contributed by glutamate 197.

The protein belongs to the peptidase M16 family. PreP subfamily. Monomer and homodimer; homodimerization is induced by binding of the substrate. Requires Zn(2+) as cofactor.

The protein localises to the mitochondrion intermembrane space. The protein resides in the mitochondrion matrix. Its function is as follows. Degrades mitochondrial transit peptides after their cleavage in the intermembrane space or in the matrix, and presequence peptides; clearance of these peptides is required to keep the presequence processing machinery running. Preferentially cleaves the N-terminal side of paired basic amino acid residues. Also degrades other unstructured peptides. May function as an ATP-dependent peptidase as opposed to a metalloendopeptidase. The polypeptide is Presequence protease, mitochondrial (cym1) (Aspergillus oryzae (strain ATCC 42149 / RIB 40) (Yellow koji mold)).